The primary structure comprises 335 residues: DNA-directed RNA polymerase subunit alpha (335 aa).

The tract at residues 1 to 231 is alpha N-terminal domain (alpha-NTD); sequence MVREKITVST…DLLIPFLHTK (231 aa). Residues 263–335 form an alpha C-terminal domain (alpha-CTD) region; that stretch reads KKMALKSIFI…FVIDLPKNKF (73 aa).

It belongs to the RNA polymerase alpha chain family. In terms of assembly, in plastids the minimal PEP RNA polymerase catalytic core is composed of four subunits: alpha, beta, beta', and beta''. When a (nuclear-encoded) sigma factor is associated with the core the holoenzyme is formed, which can initiate transcription.

Its subcellular location is the plastid. It localises to the chloroplast. The catalysed reaction is RNA(n) + a ribonucleoside 5'-triphosphate = RNA(n+1) + diphosphate. Its function is as follows. DNA-dependent RNA polymerase catalyzes the transcription of DNA into RNA using the four ribonucleoside triphosphates as substrates. In Helianthus annuus (Common sunflower), this protein is DNA-directed RNA polymerase subunit alpha.